Reading from the N-terminus, the 100-residue chain is Urease subunit gamma (100 aa).

Belongs to the urease gamma subunit family. As to quaternary structure, heterotrimer of UreA (gamma), UreB (beta) and UreC (alpha) subunits. Three heterotrimers associate to form the active enzyme.

It is found in the cytoplasm. It carries out the reaction urea + 2 H2O + H(+) = hydrogencarbonate + 2 NH4(+). Its pathway is nitrogen metabolism; urea degradation; CO(2) and NH(3) from urea (urease route): step 1/1. This chain is Urease subunit gamma, found in Blochmanniella floridana.